Here is an 80-residue protein sequence, read N- to C-terminus: Small ribosomal subunit protein bS18 (80 aa).

Belongs to the bacterial ribosomal protein bS18 family. In terms of assembly, part of the 30S ribosomal subunit. Forms a tight heterodimer with protein bS6.

Its function is as follows. Binds as a heterodimer with protein bS6 to the central domain of the 16S rRNA, where it helps stabilize the platform of the 30S subunit. The polypeptide is Small ribosomal subunit protein bS18 (Staphylococcus epidermidis (strain ATCC 35984 / DSM 28319 / BCRC 17069 / CCUG 31568 / BM 3577 / RP62A)).